A 117-amino-acid polypeptide reads, in one-letter code: Gamma-aminobutyric acid receptor-associated protein-like 3 (117 aa).

The segment at 1 to 22 (MKFQYKEVHPFEYRKKEGEKIR) is interaction with beta-tubulin. Residues 36 to 68 (APKARVPDLDRRKYLVPSDLTDGQFYLLIRKRI) are interaction with GABRG2. Gly116 carries Phosphatidylethanolamine amidated glycine lipidation. Lys117 is a propeptide (removed in mature form).

It belongs to the ATG8 family. As to quaternary structure, interacts with GABRG2 and beta-tubulin. The precursor molecule is cleaved by ATG4B to form the cytosolic form, GABARAPL3-I. This is activated by APG7L/ATG7, transferred to ATG3 and conjugated to phospholipid to form the membrane-bound form, GABARAPL3-II. ATG4B also mediates the delipidation required for GABARAPL1 recycling when autophagosomes fuse with lysosomes. In terms of tissue distribution, ubiquitous. Expressed at very high levels in the brain, heart, peripheral blood leukocytes, liver, kidney, placenta and skeletal muscle. Expressed at very low levels in thymus and small intestine.

It is found in the cytoplasm. The protein localises to the cytoskeleton. It localises to the cytoplasmic vesicle. The protein resides in the autophagosome membrane. In terms of biological role, ubiquitin-like modifier involved in autophagosome formation. Whereas LC3s are involved in elongation of the phagophore membrane, the GABARAP/GATE-16 subfamily is essential for a later stage in autophagosome maturation. The sequence is that of Gamma-aminobutyric acid receptor-associated protein-like 3 (GABARAPL3) from Homo sapiens (Human).